We begin with the raw amino-acid sequence, 85 residues long: Alpha-toxin Ac2 (85 aa).

An N-terminal signal peptide occupies residues 1–19 (MNYLVMISLALLFMTGVES). The LCN-type CS-alpha/beta domain maps to 21-83 (KDGYIVDDRN…VRTKGPGRCK (63 aa)). 4 disulfide bridges follow: Cys-31-Cys-82, Cys-35-Cys-55, Cys-41-Cys-65, and Cys-45-Cys-67. Lys-83 carries the post-translational modification Lysine amide.

Belongs to the long (4 C-C) scorpion toxin superfamily. Sodium channel inhibitor family. Alpha subfamily. Expressed by the venom gland.

The protein localises to the secreted. Functionally, alpha toxins bind voltage-independently at site-3 of sodium channels (Nav) and inhibit the inactivation of the activated channels, thereby blocking neuronal transmission. The sequence is that of Alpha-toxin Ac2 from Androctonus crassicauda (Arabian fat-tailed scorpion).